Reading from the N-terminus, the 103-residue chain is Ig kappa-b5 chain C region (103 aa).

Residues P5–S99 form the Ig-like domain. C26 and C85 form a disulfide bridge.

This is Ig kappa-b5 chain C region from Oryctolagus cuniculus (Rabbit).